The following is a 651-amino-acid chain: Probable potassium transport system protein Kup (651 aa).

A compositionally biased stretch (basic and acidic residues) spans 1–16 (MRDSPGSKSSSERWHD). Residues 1–31 (MRDSPGSKSSSERWHDTMAVSDPTAEGKDES) form a disordered region. 12 helical membrane passes run 38–58 (FWAL…TSPL), 74–94 (VTPA…FIVV), 129–149 (LLLL…SMIT), 168–188 (LQDY…AVQS), 197–217 (AFAP…VLHI), 232–252 (AIHF…LVFL), 276–296 (WFCL…ALIL), 309–329 (LAPA…TVIA), 366–386 (IYLP…VLLF), 396–416 (YGIA…VVVW), 423–443 (PAAA…FFSA), and 448–468 (LFDG…LIWT).

It belongs to the HAK/KUP transporter (TC 2.A.72) family.

It is found in the cell inner membrane. It catalyses the reaction K(+)(in) + H(+)(in) = K(+)(out) + H(+)(out). Functionally, transport of potassium into the cell. Likely operates as a K(+):H(+) symporter. The sequence is that of Probable potassium transport system protein Kup from Nitrobacter winogradskyi (strain ATCC 25391 / DSM 10237 / CIP 104748 / NCIMB 11846 / Nb-255).